A 309-amino-acid polypeptide reads, in one-letter code: NADH-cytochrome b5 reductase 1 (309 aa).

Residues 30–50 form a helical membrane-spanning segment; it reads FVPYAVALTAILAGLKLFTGG. The 106-residue stretch at 60 to 165 folds into the FAD-binding FR-type domain; that stretch reads TEFQEFVLKE…RGPKGAMVYT (106 aa). FAD is bound by residues 145 to 160 and 171 to 208; these read TTLK…GPKG and HIGM…KLDL.

This sequence belongs to the flavoprotein pyridine nucleotide cytochrome reductase family. In terms of assembly, monomer. Component of the 2-(3-amino-3-carboxypropyl)histidine synthase complex composed of dph1, dph2, dph3 and a NADH-dependent reductase, predominantly cbr1. FAD serves as cofactor.

It is found in the mitochondrion outer membrane. It catalyses the reaction 2 Fe(III)-[cytochrome b5] + NADH = 2 Fe(II)-[cytochrome b5] + NAD(+) + H(+). The enzyme catalyses 2 Fe(3+)-[Dph3] + NADH = 2 Fe(2+)-[Dph3] + NAD(+) + H(+). It functions in the pathway protein modification; peptidyl-diphthamide biosynthesis. In terms of biological role, NADH-dependent reductase for dph3 and cytochrome b5. Required for the first step of diphthamide biosynthesis, a post-translational modification of histidine which occurs in elongation factor 2. Dph1 and dph2 transfer a 3-amino-3-carboxypropyl (ACP) group from S-adenosyl-L-methionine (SAM) to a histidine residue, the reaction is assisted by a reduction system comprising dph3 and a NADH-dependent reductase, predominantly cbr1. By reducing dph3, also involved in the formation of the tRNA wobble base modification mcm5s 2U (5-methoxycarbonylmethyl-2-thiouridine), mediated by the elongator complex. The cytochrome b5/NADH cytochrome b5 reductase electron transfer system supports the catalytic activity of several sterol biosynthetic enzymes. This is NADH-cytochrome b5 reductase 1 (cbr1) from Neosartorya fischeri (strain ATCC 1020 / DSM 3700 / CBS 544.65 / FGSC A1164 / JCM 1740 / NRRL 181 / WB 181) (Aspergillus fischerianus).